We begin with the raw amino-acid sequence, 474 residues long: C6 finger domain transcription factor aclZ (474 aa).

A DNA-binding region (zn(2)-C6 fungal-type) is located at residues 42 to 69; it reads CNQCHAAKVRCSGERTGCDRCNNLQYQC. Disordered stretches follow at residues 85–148 and 177–206; these read RGNK…SHSA and MSSD…DSHT. The segment covering 90–105 has biased composition (polar residues); the sequence is VRTTTEALQRPATAST. The segment covering 117–138 has biased composition (basic and acidic residues); it reads TDQRSENDPLSRSDFGEQDAAH.

It is found in the nucleus. Its function is as follows. Transcription factor that specifically regulates the gene cluster that mediates the biosynthesis of aspirochlorine (or antibiotic A30641), an unusual halogenated spiro compound with distinctive antifungal properties due to selective inhibition of protein biosynthesis, and which is also active against bacteria, viruses, and murine tumor cells. The polypeptide is C6 finger domain transcription factor aclZ (Aspergillus oryzae (strain ATCC 42149 / RIB 40) (Yellow koji mold)).